Consider the following 234-residue polypeptide: tRNA1(Val) (adenine(37)-N6)-methyltransferase (234 aa).

The protein belongs to the methyltransferase superfamily. tRNA (adenine-N(6)-)-methyltransferase family.

Its subcellular location is the cytoplasm. It carries out the reaction adenosine(37) in tRNA1(Val) + S-adenosyl-L-methionine = N(6)-methyladenosine(37) in tRNA1(Val) + S-adenosyl-L-homocysteine + H(+). Its function is as follows. Specifically methylates the adenine in position 37 of tRNA(1)(Val) (anticodon cmo5UAC). This is tRNA1(Val) (adenine(37)-N6)-methyltransferase from Aliivibrio fischeri (strain MJ11) (Vibrio fischeri).